The sequence spans 487 residues: Protein translocase subunit SecY (487 aa).

Residues 1–20 (MSWKDTAEPLLVRMPAVQRP) are Cytoplasmic-facing. A helical transmembrane segment spans residues 21–47 (EGHVPFKRKLTWTGGVLLLYFFLTNVK). Topologically, residues 48–59 (LFGLDIDASQQV) are extracellular. An intramembrane region (helical) is located at residues 60–67 (FGRFSSIL). A discontinuously helical transmembrane segment spans residues 60 to 88 (FGRFSSILASGQGSIMQLGIGPIVTASIV). The stretch at 68-79 (ASGQGSIMQLGI) is an intramembrane region. The segment at residues 80 to 88 (GPIVTASIV) is an intramembrane region (helical). Topologically, residues 89–110 (LQLLGGADLLGLNTQDDPRDQI) are cytoplasmic. The chain crosses the membrane as a helical span at residues 111–135 (LYQGLQKLLVLVMICLTGLPMVFAG). Residues 136-153 (GFLPADTAVANSLGIGTA) lie on the Extracellular side of the membrane. Residues 154 to 178 (GVQWLIFAQMFVGGVLILFMDEVIS) traverse the membrane as a helical segment. Topologically, residues 179-184 (KWGVGS) are cytoplasmic. A helical transmembrane segment spans residues 185–203 (GIGLFIVAGVSQRLVGGLL). Over 204–244 (TAPFLGNSEGIIYTWYLFITGERGTGPVLAADGLQTVLLQG) the chain is Extracellular. The chain crosses the membrane as a helical span at residues 245–266 (ELLGLFTTVLIFAVVVYAESVR). Over 267 to 291 (VEIPLSNARVKGARGRFPVKLIYAS) the chain is Cytoplasmic. The helical transmembrane segment at 292–313 (VLPMILVRALQANIQFLGRILN) threads the bilayer. Residues 314 to 364 (AQLGSMPAFLGTYANGQPTGGLFYFLAPIQSRGDWMWWLEGTAQPVWQILT) lie on the Extracellular side of the membrane. Residues 365-384 (RVGIDLFVMLVGGAVFAVFW) form a helical membrane-spanning segment. Residues 385–427 (VETTDMGPEATAKQIHNSGMQIPGFRQNVGVIEKVLERYIPQV) lie on the Cytoplasmic side of the membrane. A helical transmembrane segment spans residues 428 to 446 (TVIGGALVGLLAVMANMLG). The Extracellular segment spans residues 447–451 (TIGGV). A helical transmembrane segment spans residues 452-466 (SGTGLLLTVSITYKL). The Cytoplasmic segment spans residues 467-487 (YEEIAEEQLMEMHPMMRQMFG).

It belongs to the SecY/SEC61-alpha family. In terms of assembly, component of the Sec protein translocase complex. Heterotrimer consisting of alpha (SecY), beta (SecG) and gamma (SecE) subunits. The heterotrimers can form oligomers, although 1 heterotrimer is thought to be able to translocate proteins. Interacts with the ribosome. May interact with SecDF, and other proteins may be involved.

It is found in the cell membrane. Functionally, the central subunit of the protein translocation channel SecYEG. Consists of two halves formed by TMs 1-5 and 6-10. These two domains form a lateral gate at the front which open onto the bilayer between TMs 2 and 7, and are clamped together by SecE at the back. The channel is closed by both a pore ring composed of hydrophobic SecY resides and a short helix (helix 2A) on the extracellular side of the membrane which forms a plug. The plug probably moves laterally to allow the channel to open. The ring and the pore may move independently. This Haloarcula marismortui (strain ATCC 43049 / DSM 3752 / JCM 8966 / VKM B-1809) (Halobacterium marismortui) protein is Protein translocase subunit SecY.